The sequence spans 354 residues: D-alanine--D-alanine ligase (354 aa).

Positions 140–344 constitute an ATP-grasp domain; it reads KRLLRDSGLS…ISTLLTRLIM (205 aa). 170-225 provides a ligand contact to ATP; the sequence is ADMFGLPFFVKPVNQGSSIGVAKVNDDYSFHSALDIAFFYSHKIIIESCIAGRELE. Residues Asp298, Glu311, and Asn313 each coordinate Mg(2+).

It belongs to the D-alanine--D-alanine ligase family. Requires Mg(2+) as cofactor. Mn(2+) is required as a cofactor.

Its subcellular location is the cytoplasm. The enzyme catalyses 2 D-alanine + ATP = D-alanyl-D-alanine + ADP + phosphate + H(+). Its pathway is cell wall biogenesis; peptidoglycan biosynthesis. In terms of biological role, cell wall formation. This Blochmanniella floridana protein is D-alanine--D-alanine ligase.